The primary structure comprises 181 residues: Crossover junction endodeoxyribonuclease RuvC (181 aa).

Active-site residues include Asp-7, Glu-67, and Asp-139. Positions 7, 67, and 139 each coordinate Mg(2+).

The protein belongs to the RuvC family. Homodimer which binds Holliday junction (HJ) DNA. The HJ becomes 2-fold symmetrical on binding to RuvC with unstacked arms; it has a different conformation from HJ DNA in complex with RuvA. In the full resolvosome a probable DNA-RuvA(4)-RuvB(12)-RuvC(2) complex forms which resolves the HJ. Mg(2+) serves as cofactor.

It localises to the cytoplasm. It carries out the reaction Endonucleolytic cleavage at a junction such as a reciprocal single-stranded crossover between two homologous DNA duplexes (Holliday junction).. In terms of biological role, the RuvA-RuvB-RuvC complex processes Holliday junction (HJ) DNA during genetic recombination and DNA repair. Endonuclease that resolves HJ intermediates. Cleaves cruciform DNA by making single-stranded nicks across the HJ at symmetrical positions within the homologous arms, yielding a 5'-phosphate and a 3'-hydroxyl group; requires a central core of homology in the junction. The consensus cleavage sequence is 5'-(A/T)TT(C/G)-3'. Cleavage occurs on the 3'-side of the TT dinucleotide at the point of strand exchange. HJ branch migration catalyzed by RuvA-RuvB allows RuvC to scan DNA until it finds its consensus sequence, where it cleaves and resolves the cruciform DNA. The protein is Crossover junction endodeoxyribonuclease RuvC of Bordetella avium (strain 197N).